The following is a 381-amino-acid chain: Putative steryl acetyl hydrolase mug81 (381 aa).

Residues 1 to 9 lie on the Cytoplasmic side of the membrane; sequence MISLSLLYR. The helical; Signal-anchor for type II membrane protein transmembrane segment at 10–30 threads the bilayer; sequence ILTLPIILVGTTILYFTIGTN. Over 31–381 the chain is Lumenal; it reads FPHDELRHNL…YTFLRETFEE (351 aa). The Involved in the stabilization of the negatively charged intermediate by the formation of the oxyanion hole motif lies at 125–127; the sequence is HGG. N-linked (GlcNAc...) asparagine glycosylation is present at Asn-193. The active site involves Ser-200.

Belongs to the 'GDXG' lipolytic enzyme family.

The protein localises to the cytoplasm. Its subcellular location is the endoplasmic reticulum membrane. Required for the deacetylation of acetylated sterols. Has a role in meiosis. The sequence is that of Putative steryl acetyl hydrolase mug81 (mug180) from Schizosaccharomyces pombe (strain 972 / ATCC 24843) (Fission yeast).